A 231-amino-acid chain; its full sequence is Large ribosomal subunit protein uL1 (231 aa).

The protein belongs to the universal ribosomal protein uL1 family. Part of the 50S ribosomal subunit.

In terms of biological role, binds directly to 23S rRNA. The L1 stalk is quite mobile in the ribosome, and is involved in E site tRNA release. Functionally, protein L1 is also a translational repressor protein, it controls the translation of the L11 operon by binding to its mRNA. This chain is Large ribosomal subunit protein uL1, found in Teredinibacter turnerae (strain ATCC 39867 / T7901).